Here is a 156-residue protein sequence, read N- to C-terminus: ATP synthase subunit b (156 aa).

The chain crosses the membrane as a helical span at residues 7–27; that stretch reads LFVQAIVFLILVLFTMKFVWP.

It belongs to the ATPase B chain family. As to quaternary structure, F-type ATPases have 2 components, F(1) - the catalytic core - and F(0) - the membrane proton channel. F(1) has five subunits: alpha(3), beta(3), gamma(1), delta(1), epsilon(1). F(0) has three main subunits: a(1), b(2) and c(10-14). The alpha and beta chains form an alternating ring which encloses part of the gamma chain. F(1) is attached to F(0) by a central stalk formed by the gamma and epsilon chains, while a peripheral stalk is formed by the delta and b chains.

It is found in the cell inner membrane. In terms of biological role, f(1)F(0) ATP synthase produces ATP from ADP in the presence of a proton or sodium gradient. F-type ATPases consist of two structural domains, F(1) containing the extramembraneous catalytic core and F(0) containing the membrane proton channel, linked together by a central stalk and a peripheral stalk. During catalysis, ATP synthesis in the catalytic domain of F(1) is coupled via a rotary mechanism of the central stalk subunits to proton translocation. Functionally, component of the F(0) channel, it forms part of the peripheral stalk, linking F(1) to F(0). The chain is ATP synthase subunit b from Paracidovorax citrulli (strain AAC00-1) (Acidovorax citrulli).